Here is a 461-residue protein sequence, read N- to C-terminus: MTPNSMTENRLPAWDKQKPHPDRGQDWKLVGMSEACLHRKSHVERRGALKNEQTSSHLIQATWASSIFHLDPDDVNDQSVSSAQTFQTEEKKCKGYIPSYLDKDELCVVCGDKATGYHYRCITCEGCKGFFRRTIQKSLHPSYSCKYEGKCIIDKVTRNQCQECRFKKCIYVGMATDLVLDDSKRLAKRKLIEENREKRRREELQKSIGHKPEPTDEEWELIKTVTEAHVATNAQGSHWKQKRKFLPEDIGQAPIVNAPEGGQVDLEAFSHFTKIITPAITRVVDFAKKLPMFCELPCEDQIILLKGCCMEIMSLRAAVRYDPDSETLTLNGEMAVTRGQLKNGGLGVVSDAIFDLGMSLSSFNLDDTEVALLQAVLLMSSDRPGLACVERIEKYQDSFLLAFEHYINYRKHHVTHFWPKLLMKVTDLRMIGACHASRFLHMKVECPTELFPPLFLEVFED.

The segment at 1 to 24 is disordered; that stretch reads MTPNSMTENRLPAWDKQKPHPDRG. The interval 1-106 is modulating; it reads MTPNSMTENR…IPSYLDKDEL (106 aa). Basic and acidic residues predominate over residues 13–24; the sequence is AWDKQKPHPDRG. Zn(2+)-binding residues include cysteine 107, cysteine 110, cysteine 124, cysteine 127, cysteine 145, cysteine 151, cysteine 161, and cysteine 164. NR C4-type zinc fingers lie at residues 107-127 and 145-169; these read CVVC…CEGC and CKYE…FKKC. Residues 107–181 constitute a DNA-binding region (nuclear receptor); sequence CVVCGDKATG…VGMATDLVLD (75 aa). Positions 217 to 461 constitute an NR LBD domain; sequence EEWELIKTVT…PPLFLEVFED (245 aa). The tract at residues 244 to 461 is interaction with NR2F6; sequence KFLPEDIGQA…PPLFLEVFED (218 aa). Arginine 282, asparagine 331, and histidine 435 together coordinate 3,3',5-triiodo-L-thyronine. The L-thyroxine site is built by arginine 282, asparagine 331, and histidine 435.

The protein belongs to the nuclear hormone receptor family. NR1 subfamily. Binds DNA as a dimer; homodimer and heterodimer with RXRA. Interacts with the coactivators NCOA1/SRC1, NCOA2/GRIP1, NCOA7 and MED1/TRAP220 in a ligand-inducible manner. Interacts with the corepressor NCOR1 in absence of ligand. Interacts with C1D. Interacts with NR2F6; the interaction impairs the binding of the THRB homodimer and THRB:RXRB heterodimer to T3 response elements. Interacts with PRMT2 and THRSP. Interacts with TACC1; this interaction is decreased in the presence of thyroid hormone T3.

It is found in the nucleus. Functionally, nuclear hormone receptor that can act as a repressor or activator of transcription. High affinity receptor for thyroid hormones, including triiodothyronine and thyroxine. The sequence is that of Thyroid hormone receptor beta (Thrb) from Rattus norvegicus (Rat).